The following is a 172-amino-acid chain: ATP synthase subunit b (172 aa).

Residues 18–38 form a helical membrane-spanning segment; sequence IVWSLIILVIVAVFFYKFFMP.

It belongs to the ATPase B chain family. In terms of assembly, F-type ATPases have 2 components, F(1) - the catalytic core - and F(0) - the membrane proton channel. F(1) has five subunits: alpha(3), beta(3), gamma(1), delta(1), epsilon(1). F(0) has three main subunits: a(1), b(2) and c(10-14). The alpha and beta chains form an alternating ring which encloses part of the gamma chain. F(1) is attached to F(0) by a central stalk formed by the gamma and epsilon chains, while a peripheral stalk is formed by the delta and b chains.

It localises to the cell membrane. In terms of biological role, f(1)F(0) ATP synthase produces ATP from ADP in the presence of a proton or sodium gradient. F-type ATPases consist of two structural domains, F(1) containing the extramembraneous catalytic core and F(0) containing the membrane proton channel, linked together by a central stalk and a peripheral stalk. During catalysis, ATP synthesis in the catalytic domain of F(1) is coupled via a rotary mechanism of the central stalk subunits to proton translocation. Component of the F(0) channel, it forms part of the peripheral stalk, linking F(1) to F(0). The chain is ATP synthase subunit b from Bifidobacterium longum (strain DJO10A).